A 333-amino-acid chain; its full sequence is Probable G-protein coupled receptor 33 (333 aa).

At 1 to 30 the chain is on the extracellular side; the sequence is MDLINSTDYLINASTLVRNSTQFLAPASKM. 3 N-linked (GlcNAc...) asparagine glycosylation sites follow: N5, N12, and N19. A helical membrane pass occupies residues 31–53; the sequence is IIALSLYISSIIGTITNGLYLWV. Residues 54–64 are Cytoplasmic-facing; it reads LRFKMKQTVNT. Residues 65–86 form a helical membrane-spanning segment; sequence LLFFHLILSYFISTMILPFMAT. Residues 87 to 103 lie on the Extracellular side of the membrane; sequence SQLQDNHWNFGTALCKV. A disulfide bridge links C101 with C179. Residues 104 to 124 form a helical membrane-spanning segment; the sequence is FNGTLSLGMFTSVFFLSAIGL. At 125–143 the chain is on the cytoplasmic side; it reads DRYLLTLHPVWSQQHRTPR. A helical membrane pass occupies residues 144-165; the sequence is WASSIVLGVWISAAALSIPYLI. The Extracellular segment spans residues 166–209; sequence FRQTHHDRKGKVTCQNNYAVSTNWESKEMQALRQWIHVACFISR. Residues 210–230 form a helical membrane-spanning segment; it reads FLLGFLLPFFIIIFCYERVAS. Topologically, residues 231-246 are cytoplasmic; it reads KVKERSLFKSSKPFKV. A helical membrane pass occupies residues 247–268; the sequence is MMTAIISFFVCWMPYHIHQGLL. The Extracellular segment spans residues 269–283; sequence LTMNQSLLLELTLIL. Residue N272 is glycosylated (N-linked (GlcNAc...) asparagine). Residues 284-303 traverse the membrane as a helical segment; sequence TVLTTSFNTIFSPTLYLFVG. Topologically, residues 304-333 are cytoplasmic; sequence ENFKKVFKKSILALFESTFSEDSSVERTQT.

The protein belongs to the G-protein coupled receptor 1 family.

Its subcellular location is the cell membrane. Its function is as follows. Orphan receptor; could be a chemoattractant receptor. The protein is Probable G-protein coupled receptor 33 (GPR33) of Pan paniscus (Pygmy chimpanzee).